A 409-amino-acid polypeptide reads, in one-letter code: Arginine deiminase (409 aa).

Residue Cys399 is the Amidino-cysteine intermediate of the active site.

This sequence belongs to the arginine deiminase family.

The protein localises to the cytoplasm. It catalyses the reaction L-arginine + H2O = L-citrulline + NH4(+). The protein operates within amino-acid degradation; L-arginine degradation via ADI pathway; carbamoyl phosphate from L-arginine: step 1/2. In Streptococcus pneumoniae (strain 70585), this protein is Arginine deiminase.